Reading from the N-terminus, the 484-residue chain is Notoamide biosynthesis transcriptional activator notL (484 aa).

Positions 33–60 form a DNA-binding region, zn(2)-C6 fungal-type; sequence CQSCATSKIKCPKEKTSCSKCQARGIEC. Disordered stretches follow at residues 70 to 154 and 363 to 387; these read RRRE…NNSV and GGGESDTGQRPATSMIPNGKDQMRP. Residues 76 to 122 show a composition bias toward low complexity; that stretch reads TGHPTSCTSTSTTANSSSSSSRSSNSSSSSSTSPPSSSSSLSSNPEP. Residues 123-133 are compositionally biased toward basic and acidic residues; the sequence is TSDKDLPRPRS. Composition is skewed to polar residues over residues 139–154 and 368–378; these read ANSTEPSILPPANNSV and DTGQRPATSMI.

It is found in the nucleus. Functionally, transcription factor that probably regulates the expression of the gene cluster that mediates the biosynthesis of notoamide, a fungal indole alkaloid that belongs to a family of natural products containing a characteristic bicyclo[2.2.2]diazaoctane core. The chain is Notoamide biosynthesis transcriptional activator notL from Aspergillus sp. (strain MF297-2).